The following is a 147-amino-acid chain: Large ribosomal subunit protein uL13 (147 aa).

The protein belongs to the universal ribosomal protein uL13 family. In terms of assembly, part of the 50S ribosomal subunit.

In terms of biological role, this protein is one of the early assembly proteins of the 50S ribosomal subunit, although it is not seen to bind rRNA by itself. It is important during the early stages of 50S assembly. This Leuconostoc citreum (strain KM20) protein is Large ribosomal subunit protein uL13.